The chain runs to 431 residues: Adenylosuccinate synthetase (431 aa).

GTP contacts are provided by residues 13–19 (GDEGKGK) and 41–43 (GHT). The active-site Proton acceptor is D14. Mg(2+) contacts are provided by D14 and G41. Residues 14–17 (DEGK), 39–42 (NAGH), T130, R144, Q225, T240, and R304 each bind IMP. H42 serves as the catalytic Proton donor. 300-306 (ATTGRKR) contributes to the substrate binding site. Residues R306, 332–334 (KLD), and 415–417 (STG) contribute to the GTP site.

The protein belongs to the adenylosuccinate synthetase family. In terms of assembly, homodimer. Requires Mg(2+) as cofactor.

Its subcellular location is the cytoplasm. It carries out the reaction IMP + L-aspartate + GTP = N(6)-(1,2-dicarboxyethyl)-AMP + GDP + phosphate + 2 H(+). It functions in the pathway purine metabolism; AMP biosynthesis via de novo pathway; AMP from IMP: step 1/2. In terms of biological role, plays an important role in the de novo pathway of purine nucleotide biosynthesis. Catalyzes the first committed step in the biosynthesis of AMP from IMP. The chain is Adenylosuccinate synthetase from Shewanella frigidimarina (strain NCIMB 400).